Reading from the N-terminus, the 85-residue chain is Small ribosomal subunit protein uS17 (85 aa).

Belongs to the universal ribosomal protein uS17 family. In terms of assembly, part of the 30S ribosomal subunit.

One of the primary rRNA binding proteins, it binds specifically to the 5'-end of 16S ribosomal RNA. The protein is Small ribosomal subunit protein uS17 of Agathobacter rectalis (strain ATCC 33656 / DSM 3377 / JCM 17463 / KCTC 5835 / VPI 0990) (Eubacterium rectale).